The sequence spans 328 residues: tRNA uridine(34) hydroxylase (328 aa).

The Rhodanese domain occupies 130-224; the sequence is LDEDTVVLDT…YGKDPEVQGE (95 aa). Cys184 functions as the Cysteine persulfide intermediate in the catalytic mechanism.

The protein belongs to the TrhO family.

The enzyme catalyses uridine(34) in tRNA + AH2 + O2 = 5-hydroxyuridine(34) in tRNA + A + H2O. In terms of biological role, catalyzes oxygen-dependent 5-hydroxyuridine (ho5U) modification at position 34 in tRNAs. This is tRNA uridine(34) hydroxylase from Streptococcus sanguinis (strain SK36).